The chain runs to 124 residues: MEDYKPFFEAIDELKEKSENGWVVVVEGKKDVRSLRAIGVSGEIVVFTGYASTADTLKDRKVIILTDSDAKGMEIEKGLVEALKTYGKIPDVEIKRKIFSNVRKEISKVEEISAFYEKISGIEL.

The Toprim domain occupies 21–98 (GWVVVVEGKK…IPDVEIKRKI (78 aa)). Positions 27, 67, and 69 each coordinate Mg(2+).

This sequence belongs to the UPF0292 family. It depends on Mg(2+) as a cofactor.

This chain is UPF0292 protein AF_0905, found in Archaeoglobus fulgidus (strain ATCC 49558 / DSM 4304 / JCM 9628 / NBRC 100126 / VC-16).